A 755-amino-acid polypeptide reads, in one-letter code: Atypical kinase coq-8, mitochondrial (755 aa).

A disordered region spans residues 57–78; sequence QDVDPLKEPNKTNAPLLSPTLP. The span at 67–78 shows a compositional bias: polar residues; it reads KTNAPLLSPTLP. ATP is bound by residues 435–443 and K457; that span reads FACASIGQV. Residue D587 is the Proton acceptor of the active site.

Belongs to the protein kinase superfamily. ADCK protein kinase family.

The protein resides in the mitochondrion. It functions in the pathway cofactor biosynthesis; ubiquinone biosynthesis. In terms of biological role, atypical kinase involved in the biosynthesis of coenzyme Q, also named ubiquinone, an essential lipid-soluble electron transporter for aerobic cellular respiration. Its substrate specificity is still unclear: may act as a protein kinase that mediates phosphorylation of coq-3. According to other reports, acts as a small molecule kinase, possibly a lipid kinase that phosphorylates a prenyl lipid in the ubiquinone biosynthesis pathway, as suggested by its ability to bind coenzyme Q lipid intermediates. The sequence is that of Atypical kinase coq-8, mitochondrial (coq-8) from Caenorhabditis elegans.